Consider the following 474-residue polypeptide: UDP-N-acetylmuramate--L-alanine ligase (474 aa).

115-121 serves as a coordination point for ATP; that stretch reads GTHGKTT.

Belongs to the MurCDEF family.

The protein localises to the cytoplasm. The catalysed reaction is UDP-N-acetyl-alpha-D-muramate + L-alanine + ATP = UDP-N-acetyl-alpha-D-muramoyl-L-alanine + ADP + phosphate + H(+). Its pathway is cell wall biogenesis; peptidoglycan biosynthesis. Its function is as follows. Cell wall formation. This Novosphingobium aromaticivorans (strain ATCC 700278 / DSM 12444 / CCUG 56034 / CIP 105152 / NBRC 16084 / F199) protein is UDP-N-acetylmuramate--L-alanine ligase.